Consider the following 133-residue polypeptide: Type III secretion protein HrcQb (133 aa).

Positions 1-21 (MSTEDLYQDDVEMLDDYEEPV) are enriched in acidic residues. Residues 1–60 (MSTEDLYQDDVEMLDDYEEPVPEQADQQQRDDEYAEHAFGYADSDAEHEEQSGDHHESPM) are disordered. Residues 49–59 (EEQSGDHHESP) are compositionally biased toward basic and acidic residues.

Belongs to the FliN/MopA/SpaO family. As to quaternary structure, homotetramer. The four monomers assemble into two tightly bound homodimers. Interacts with HrcQa.

Its subcellular location is the cytoplasm. Functionally, component of the type III secretion system, which is required for effector protein delivery, parasitism, and pathogenicity. Probably participates in the formation of a C-ring-like assembly along with HrcQa. This chain is Type III secretion protein HrcQb (hrcQb), found in Pseudomonas syringae pv. syringae.